We begin with the raw amino-acid sequence, 267 residues long: Thiazole synthase (267 aa).

Lys101 acts as the Schiff-base intermediate with DXP in catalysis. Residues Gly162, 188–189 (AG), and 210–211 (NT) each bind 1-deoxy-D-xylulose 5-phosphate. The interval 247–267 (HASPSSPAAGVPCLPDPEVPV) is disordered.

This sequence belongs to the ThiG family. In terms of assembly, homotetramer. Forms heterodimers with either ThiH or ThiS.

Its subcellular location is the cytoplasm. The enzyme catalyses [ThiS sulfur-carrier protein]-C-terminal-Gly-aminoethanethioate + 2-iminoacetate + 1-deoxy-D-xylulose 5-phosphate = [ThiS sulfur-carrier protein]-C-terminal Gly-Gly + 2-[(2R,5Z)-2-carboxy-4-methylthiazol-5(2H)-ylidene]ethyl phosphate + 2 H2O + H(+). Its pathway is cofactor biosynthesis; thiamine diphosphate biosynthesis. In terms of biological role, catalyzes the rearrangement of 1-deoxy-D-xylulose 5-phosphate (DXP) to produce the thiazole phosphate moiety of thiamine. Sulfur is provided by the thiocarboxylate moiety of the carrier protein ThiS. In vitro, sulfur can be provided by H(2)S. This chain is Thiazole synthase, found in Deinococcus geothermalis (strain DSM 11300 / CIP 105573 / AG-3a).